The sequence spans 413 residues: L-cysteine:1D-myo-inositol 2-amino-2-deoxy-alpha-D-glucopyranoside ligase (413 aa).

Zn(2+) is bound at residue C15. L-cysteinyl-5'-AMP is bound by residues 15–18, T30, and 53–55; these read CGIT and NVT. Residues 17–27 carry the 'HIGH' region motif; the sequence is ITPYDATHLGH. Residues 155–160 carry the 'ERGGDP' region motif; sequence ERGGDP. Position 195 (W195) interacts with L-cysteinyl-5'-AMP. Zn(2+) is bound at residue C199. 217–219 lines the L-cysteinyl-5'-AMP pocket; that stretch reads GTD. A Zn(2+)-binding site is contributed by H224. Residue V251 coordinates L-cysteinyl-5'-AMP. The short motif at 257–261 is the 'KMSKS' region element; sequence KMSKS.

Belongs to the class-I aminoacyl-tRNA synthetase family. MshC subfamily. In terms of assembly, monomer. Requires Zn(2+) as cofactor.

It catalyses the reaction 1D-myo-inositol 2-amino-2-deoxy-alpha-D-glucopyranoside + L-cysteine + ATP = 1D-myo-inositol 2-(L-cysteinylamino)-2-deoxy-alpha-D-glucopyranoside + AMP + diphosphate + H(+). Catalyzes the ATP-dependent condensation of GlcN-Ins and L-cysteine to form L-Cys-GlcN-Ins. This chain is L-cysteine:1D-myo-inositol 2-amino-2-deoxy-alpha-D-glucopyranoside ligase, found in Frankia alni (strain DSM 45986 / CECT 9034 / ACN14a).